Reading from the N-terminus, the 200-residue chain is Small ribosomal subunit protein uS4 (200 aa).

Residues 22-43 (TGKELERRPYAPGQHGPTQRKK) are disordered. Residues 92 to 170 (QRLDNIVYRL…VPEYVTFDAE (79 aa)) enclose the S4 RNA-binding domain.

Belongs to the universal ribosomal protein uS4 family. Part of the 30S ribosomal subunit. Contacts protein S5. The interaction surface between S4 and S5 is involved in control of translational fidelity.

In terms of biological role, one of the primary rRNA binding proteins, it binds directly to 16S rRNA where it nucleates assembly of the body of the 30S subunit. Its function is as follows. With S5 and S12 plays an important role in translational accuracy. This is Small ribosomal subunit protein uS4 from Listeria monocytogenes serotype 4a (strain HCC23).